Consider the following 138-residue polypeptide: Putative nickel-responsive regulator (138 aa).

Residues histidine 78, histidine 89, histidine 91, and cysteine 97 each coordinate Ni(2+).

The protein belongs to the transcriptional regulatory CopG/NikR family. It depends on Ni(2+) as a cofactor.

Its function is as follows. Transcriptional regulator. The chain is Putative nickel-responsive regulator from Desulfovibrio desulfuricans (strain ATCC 27774 / DSM 6949 / MB).